A 210-amino-acid polypeptide reads, in one-letter code: RNA chaperone ProQ (210 aa).

Positions 118–146 (KAAKPEKKRPARRVAAKGQHAKETTTNKA) are disordered. Residues 123–132 (EKKRPARRVA) show a composition bias toward basic residues.

This sequence belongs to the ProQ family.

The protein resides in the cytoplasm. Its function is as follows. RNA chaperone with significant RNA binding, RNA strand exchange and RNA duplexing activities. The chain is RNA chaperone ProQ from Pasteurella multocida (strain Pm70).